Consider the following 68-residue polypeptide: Putative membrane protein insertion efficiency factor (68 aa).

Belongs to the UPF0161 family.

The protein resides in the cell membrane. Could be involved in insertion of integral membrane proteins into the membrane. The sequence is that of Putative membrane protein insertion efficiency factor from Syntrophomonas wolfei subsp. wolfei (strain DSM 2245B / Goettingen).